The primary structure comprises 309 residues: MADLQAVLDSIHAELSPRLGEGKVADYIPELAKVDPNQFGMAIATVDGNIHSVGHADVPFSIQSISKVFMLTLALGKVGESLWNRVGREPSGTAFNSIVQLEREEGIPRNPFVNAGAIAVSDVVLSGHAPREAIGELLRFVRYVADDESITIDDKVARSETQTGFRNFALANFMRAYGNIDHPVEHVLGVYFHQCAVSMSCQQLAKAGLYLAARGTNPITGHSVVSPKRARRINALMLTCGHYDGSGDFAYHVGLPGKSGVGGGILAVAPGIGSIAVWSPGLNKVGNSQLGAVALEMLAARTGWSVFGD.

Substrate-binding residues include Ser64, Asn114, Glu160, Asn167, Tyr191, Tyr243, and Val261.

This sequence belongs to the glutaminase family. In terms of assembly, homotetramer.

It catalyses the reaction L-glutamine + H2O = L-glutamate + NH4(+). This Rhizobium rhizogenes (strain K84 / ATCC BAA-868) (Agrobacterium radiobacter) protein is Glutaminase.